The chain runs to 192 residues: Large ribosomal subunit protein uL3 (192 aa).

This sequence belongs to the universal ribosomal protein uL3 family. Part of the 50S ribosomal subunit. Forms a cluster with proteins L14 and L19.

In terms of biological role, one of the primary rRNA binding proteins, it binds directly near the 3'-end of the 23S rRNA, where it nucleates assembly of the 50S subunit. This Helicobacter hepaticus (strain ATCC 51449 / 3B1) protein is Large ribosomal subunit protein uL3 (rplC).